Reading from the N-terminus, the 739-residue chain is Vascular cell adhesion protein 1 (739 aa).

Positions 1-24 are cleaved as a signal peptide; sequence MPRKMVVIFGASNILWMVFAVSQA. Ig-like C2-type domains lie at 25–105, 109–212, 223–309, 312–399, 408–506, 511–595, and 600–684; these read SKME…KKLE, QVEI…KERE, PRNT…LIVQ, PFTV…IKVD, EVEM…QTLY, PRDT…VELI, and PKDI…LTLD. Residues 25-698 are Extracellular-facing; sequence SKMEIFLEPR…ENNKDYFSPE (674 aa). 5 cysteine pairs are disulfide-bonded: cysteine 47-cysteine 95, cysteine 52-cysteine 99, cysteine 137-cysteine 195, cysteine 246-cysteine 291, and cysteine 335-cysteine 383. N-linked (GlcNAc...) asparagine glycosylation is found at asparagine 76 and asparagine 77. N-linked (GlcNAc...) asparagine glycosylation is present at asparagine 273. A glycan (N-linked (GlcNAc...) asparagine) is linked at asparagine 531. A disulfide bridge links cysteine 534 with cysteine 579. The chain crosses the membrane as a helical span at residues 699–720; sequence LLVLYCASSLIIPAIGMIIYFA. Residues 721-739 are Cytoplasmic-facing; sequence RRANMKGSYSLVEAQKSKV.

Cleaved by the metalloproteinase ADAM17 to generate the soluble form. In terms of processing, sialoglycoprotein. Post-translationally, ubiquitinated by TRIM65 via 'Lys-48'-linked ubiquitination; leading to proteasomal degradation.

The protein localises to the cell membrane. It localises to the secreted. Functionally, cell adhesion glycoprotein predominantly expressed on the surface of endothelial cells that plays an important role in immune surveillance and inflammation. Acts as a major regulator of leukocyte adhesion to the endothelium through interaction with different types of integrins. During inflammatory responses, binds ligands on the surface of activated endothelial cells to initiate the activation of calcium channels and the plasma membrane-associated small GTPase RAC1 leading to leukocyte transendothelial migration. Also serves as a quality-control checkpoint for entry into bone marrow by providing a 'don't-eat-me' stamping in the context of major histocompatibility complex (MHC) class-I presentation. The chain is Vascular cell adhesion protein 1 (VCAM1) from Canis lupus familiaris (Dog).